A 128-amino-acid polypeptide reads, in one-letter code: Small ribosomal subunit protein uS8 (128 aa).

The protein belongs to the universal ribosomal protein uS8 family. In terms of assembly, part of the 30S ribosomal subunit. Contacts proteins S5 and S12.

One of the primary rRNA binding proteins, it binds directly to 16S rRNA central domain where it helps coordinate assembly of the platform of the 30S subunit. The sequence is that of Small ribosomal subunit protein uS8 from Methylacidiphilum infernorum (isolate V4) (Methylokorus infernorum (strain V4)).